The sequence spans 353 residues: Uroporphyrinogen decarboxylase (353 aa).

Substrate-binding positions include 25–29 (RQAGR), D74, Y151, S206, and H325.

This sequence belongs to the uroporphyrinogen decarboxylase family. In terms of assembly, homodimer.

The protein localises to the cytoplasm. It catalyses the reaction uroporphyrinogen III + 4 H(+) = coproporphyrinogen III + 4 CO2. It functions in the pathway porphyrin-containing compound metabolism; protoporphyrin-IX biosynthesis; coproporphyrinogen-III from 5-aminolevulinate: step 4/4. Catalyzes the decarboxylation of four acetate groups of uroporphyrinogen-III to yield coproporphyrinogen-III. The sequence is that of Uroporphyrinogen decarboxylase from Chloroherpeton thalassium (strain ATCC 35110 / GB-78).